The chain runs to 211 residues: Probable septum site-determining protein MinC (211 aa).

Belongs to the MinC family. Interacts with MinD and FtsZ.

In terms of biological role, cell division inhibitor that blocks the formation of polar Z ring septums. Rapidly oscillates between the poles of the cell to destabilize FtsZ filaments that have formed before they mature into polar Z rings. Prevents FtsZ polymerization. The polypeptide is Probable septum site-determining protein MinC (Clostridium perfringens (strain 13 / Type A)).